Here is a 1033-residue protein sequence, read N- to C-terminus: DNA polymerase I A, chloroplastic (1033 aa).

The segment covering 1 to 11 (MAVAPPLPPAP) has biased composition (pro residues). Disordered regions lie at residues 1-32 (MAVAPPLPPAPARQLRRWKGSSPRPPPWLSSP) and 104-142 (TNGTTPLRVGNLRHDPSEDIRSSNYPSLYNQRERGPSNS). A chloroplast-targeting transit peptide spans 1-55 (MAVAPPLPPAPARQLRRWKGSSPRPPPWLSSPFRRTRYLSRPAFAAGGRQDYSPS). The span at 115 to 124 (LRHDPSEDIR) shows a compositional bias: basic and acidic residues. The span at 125 to 142 (SSNYPSLYNQRERGPSNS) shows a compositional bias: polar residues. One can recognise a 3'-5' exonuclease domain in the interval 321 to 482 (FGNGKTCIWV…LYESLKNKLE (162 aa)). Residues 696-1030 (CHAIAALCEV…VDAKYAKSWY (335 aa)) form a polymerase region.

Belongs to the DNA polymerase type-A family. As to expression, expressed in shoot apical meristem, root apical meristem, leaf primordia and the marginal meristem.

The protein resides in the plastid. Its subcellular location is the chloroplast. The catalysed reaction is DNA(n) + a 2'-deoxyribonucleoside 5'-triphosphate = DNA(n+1) + diphosphate. With respect to regulation, inhibited by dideoxythymidine-triphosphate (ddTTP), but not by aphidicolin and N-ethylmaleimide. Its function is as follows. In addition to polymerase activity, this DNA polymerase exhibits 5'-3' exonuclease activity. May be required for DNA replication and accumulation in plastids. This is DNA polymerase I A, chloroplastic from Oryza sativa subsp. japonica (Rice).